A 713-amino-acid polypeptide reads, in one-letter code: Polyribonucleotide nucleotidyltransferase (713 aa).

Mg(2+) is bound by residues D498 and D504. The 67-residue stretch at 565–631 (PRILSLKVPV…RIEDLTREAK (67 aa)) folds into the KH domain. The region spanning 633–701 (GEIYEGTVTR…ERGKIDLIRP (69 aa)) is the S1 motif domain.

This sequence belongs to the polyribonucleotide nucleotidyltransferase family. Requires Mg(2+) as cofactor.

It is found in the cytoplasm. The catalysed reaction is RNA(n+1) + phosphate = RNA(n) + a ribonucleoside 5'-diphosphate. In terms of biological role, involved in mRNA degradation. Catalyzes the phosphorolysis of single-stranded polyribonucleotides processively in the 3'- to 5'-direction. The sequence is that of Polyribonucleotide nucleotidyltransferase from Thermus thermophilus (strain ATCC 27634 / DSM 579 / HB8).